The following is a 455-amino-acid chain: MPAESISADSVPDFRSTNRPVSRVAVLGATGSIGVAALDVIENLNRCDPDFAWEVSSMSGHSQIDPLIELAGGCHTPPKCVVVSDAEMEAQAAKALRTASTQTSSRLTERCRLDVGPDALVRAATENDVDVVVAAIVGRAGLESTLAAVHAGKRVALANKETLVVAGPVVTRAAANNGAQLLPVDSEHSAIFQCLAESRARQSQYATAKQSIQPESVRATDPPSSTTDSPAKTHWPGVRRLILTASGGPFRDWTTAQMREATIEQALAHPTWKMGAKITIDSASMMNKALEVIEAKWLFDVPADKIEVVVHPQSLIHSLVEFEDGSLIAQVSPPDMRIPIQYALTYPRRLPCPAPELDRSQAWDMSLCPADPDRFPALALGFEVARVGGTAGAVVNAANETAVDLFLHGQIRFTDIPEICRRTLLDHDHESSPTLERLLKLDVWARARARELAQI.

NADPH is bound by residues Thr30, Gly31, Ser32, Ile33, Gln63, and Asn159. 1-deoxy-D-xylulose 5-phosphate is bound at residue Lys160. An NADPH-binding site is contributed by Glu161. Residue Asp185 participates in Mn(2+) binding. Positions 186 and 187 each coordinate 1-deoxy-D-xylulose 5-phosphate. Residue Glu187 participates in Mn(2+) binding. Residues 205 to 214 (YATAKQSIQP) are compositionally biased toward polar residues. Residues 205 to 233 (YATAKQSIQPESVRATDPPSSTTDSPAKT) form a disordered region. 2 residues coordinate 1-deoxy-D-xylulose 5-phosphate: Ser246 and His269. Residue Gly275 coordinates NADPH. 1-deoxy-D-xylulose 5-phosphate-binding residues include Ser282, Asn287, Lys288, and Glu291. Glu291 is a Mn(2+) binding site.

It belongs to the DXR family. Mg(2+) serves as cofactor. Mn(2+) is required as a cofactor.

It carries out the reaction 2-C-methyl-D-erythritol 4-phosphate + NADP(+) = 1-deoxy-D-xylulose 5-phosphate + NADPH + H(+). It functions in the pathway isoprenoid biosynthesis; isopentenyl diphosphate biosynthesis via DXP pathway; isopentenyl diphosphate from 1-deoxy-D-xylulose 5-phosphate: step 1/6. Functionally, catalyzes the NADPH-dependent rearrangement and reduction of 1-deoxy-D-xylulose-5-phosphate (DXP) to 2-C-methyl-D-erythritol 4-phosphate (MEP). This Rhodopirellula baltica (strain DSM 10527 / NCIMB 13988 / SH1) protein is 1-deoxy-D-xylulose 5-phosphate reductoisomerase.